A 447-amino-acid polypeptide reads, in one-letter code: UDP-glycosyltransferase 76B1 (447 aa).

UDP-alpha-D-glucose is bound by residues S269, 327–328, 345–353, and 367–370; these read WA, HCGWNSTLE, and FGDQ.

Belongs to the UDP-glycosyltransferase family. As to expression, expressed in roots, leaves, hydathodes, sepals and style.

Its function is as follows. Glycosylates the amino acid-related molecules isoleucic acid (2-hydroxy-3-methylpentanoic acid) and valic acid (2-hydroxy-3-methylbutyric acid). Acts as a negative regulator of salicylic acid (SA)-dependent plant defense in the absence of pathogens and promotes the jasmonate (JA) response. Negatively influences the onset of senescence. In Arabidopsis thaliana (Mouse-ear cress), this protein is UDP-glycosyltransferase 76B1.